The primary structure comprises 556 residues: Vetispiradiene synthase 1 (556 aa).

Aspartate 309, aspartate 313, aspartate 452, threonine 456, and glutamate 460 together coordinate Mg(2+). The DDXXD motif motif lies at 309–313; it reads DDTFD.

It belongs to the terpene synthase family. Tpsa subfamily. Mg(2+) serves as cofactor.

It localises to the cytoplasm. It carries out the reaction (2E,6E)-farnesyl diphosphate = (-)-vetispiradiene + diphosphate. The protein operates within secondary metabolite biosynthesis; terpenoid biosynthesis. Functionally, sesquiterpene synthase that catalyzes the formation of vetispiradiene from trans,trans-farnesyl diphosphate. The initial internal cyclization produces the monocyclic intermediate germacrene A. This chain is Vetispiradiene synthase 1 (PVS1), found in Solanum tuberosum (Potato).